A 196-amino-acid polypeptide reads, in one-letter code: Probable malonic semialdehyde reductase RutE (196 aa).

This sequence belongs to the nitroreductase family. HadB/RutE subfamily. FMN serves as cofactor.

It carries out the reaction 3-hydroxypropanoate + NADP(+) = 3-oxopropanoate + NADPH + H(+). Functionally, may reduce toxic product malonic semialdehyde to 3-hydroxypropionic acid, which is excreted. The protein is Probable malonic semialdehyde reductase RutE of Escherichia coli O6:H1 (strain CFT073 / ATCC 700928 / UPEC).